The following is a 323-amino-acid chain: Protoheme IX farnesyltransferase (323 aa).

Helical transmembrane passes span 50–70 (IVLI…ANTF), 97–117 (NRDA…WLWL), 118–138 (LCDS…YIFV), 150–170 (NIVW…AVIV), 184–204 (AIVL…ALAM), 231–248 (IVWY…LIPA), 252–274 (IYAA…LHLG), and 293–313 (YLAV…ETIG).

The protein belongs to the UbiA prenyltransferase family. Protoheme IX farnesyltransferase subfamily.

Its subcellular location is the cell membrane. The catalysed reaction is heme b + (2E,6E)-farnesyl diphosphate + H2O = Fe(II)-heme o + diphosphate. Its pathway is porphyrin-containing compound metabolism; heme O biosynthesis; heme O from protoheme: step 1/1. Converts heme B (protoheme IX) to heme O by substitution of the vinyl group on carbon 2 of heme B porphyrin ring with a hydroxyethyl farnesyl side group. This chain is Protoheme IX farnesyltransferase, found in Corynebacterium glutamicum (strain R).